A 235-amino-acid polypeptide reads, in one-letter code: Glutathione S-transferase L3 (235 aa).

The GST N-terminal domain occupies 27–108; sequence GTTRLYTSYV…YLDNTFEGPS (82 aa). Residues 37–38, 65–66, 79–80, and 92–93 each bind glutathione; these read CP, NR, KV, and ES. Residues 86–230 enclose the GST C-terminal domain; that stretch reads NGKIIGESLD…MDPKEIVEVF (145 aa).

This sequence belongs to the GST superfamily. Lambda family.

It localises to the cytoplasm. The protein localises to the cytosol. It carries out the reaction RX + glutathione = an S-substituted glutathione + a halide anion + H(+). Functionally, catalyzes the glutathione-dependent reduction of S-glutathionylquercetin to quercetin. This Arabidopsis thaliana (Mouse-ear cress) protein is Glutathione S-transferase L3 (GSTL3).